A 381-amino-acid chain; its full sequence is Outer membrane protein assembly factor BamB (381 aa).

Residues Met1–Ala22 form the signal peptide. Cys23 carries N-palmitoyl cysteine lipidation. Cys23 carries S-diacylglycerol cysteine lipidation.

It belongs to the BamB family. In terms of assembly, part of the Bam complex.

Its subcellular location is the cell outer membrane. Its function is as follows. Part of the outer membrane protein assembly complex, which is involved in assembly and insertion of beta-barrel proteins into the outer membrane. In Burkholderia pseudomallei (strain K96243), this protein is Outer membrane protein assembly factor BamB.